The primary structure comprises 561 residues: MSSENVPSFRWTQSLRRGLSNWTHAVKGDVLADARAIVSALDFHQVAQVQRMMRKDKRSEADLTRLRDMNKEVDALMMMRSAQKDNILKVGGLSKDELMELASDLDKLRKKVQRTEGGGQPGVYAGNLTSSQLNQRSEILKMMGMGTGPRGPVGGVVKVWDIKDSSLLVNQFGSMPALTIACMTQQGGEQMNDVVQALTSLGLVYTVKYPNLSDLEKLTEKHPCLKLITQEPAQINISGYNLSLSAAVKADACMIDGGNMLETLQVKPSMFSTLIKTILEVKNREGMFVSPSPGQRNPYENILYKVCLSGDGWPYIGSRSQIKGRAWENTTVDLEGKPSVNHPPVRNGGSPDLKQIPKTKEDEVIRAIEQLDPRGTTWVDIEGPPGDPVELALFQPETGNYLHCYRRPHNENAFKDQSKFSHGLLLKDLADTQPGLISCIIRHLPNNMVLTAQGNDDIIKLLEMHGRRDIKVLDVKLSSDQARLMEDVVWERYNMLCVKHTGLVIKKKKKGAAPGSANPHCALLDCIMFDATVTGYLRDQKPKRLLPLDTLYRDNANLINL.

The binding site for the cap structure m7GTP stretch occupies residues 53–237 (MRKDKRSEAD…ITQEPAQINI (185 aa)). Mn(2+)-binding residues include aspartate 380 and glutamate 382. Glutamate 390, cysteine 497, histidine 500, and cysteine 521 together coordinate Zn(2+). Aspartate 525 is a binding site for Mn(2+).

This sequence belongs to the arenaviridae nucleocapsid protein family. In terms of assembly, homomultimerizes to form the nucleocapsid. Binds to viral genomic RNA. Interacts with glycoprotein G2. Interacts with protein Z; this interaction probably directs the encapsidated genome to budding sites. Interacts with protein L; this interaction does not interfere with Z-L interaction. Interacts with host IKBKE (via Protein kinase domain); the interaction inhibits IKBKE kinase activity.

Its subcellular location is the virion. The protein resides in the host cytoplasm. In terms of biological role, encapsidates the genome, protecting it from nucleases. The encapsidated genomic RNA is termed the nucleocapsid (NC). Serves as template for viral transcription and replication. The increased presence of protein N in host cell does not seem to trigger the switch from transcription to replication as observed in other negative strain RNA viruses. Through the interaction with host IKBKE, strongly inhibits the phosphorylation and nuclear translocation of host IRF3, a protein involved in interferon activation pathway, leading to the inhibition of interferon-beta and IRF3-dependent promoters activation. Also encodes a functional 3'-5' exoribonuclease that degrades preferentially dsRNA substrates and thereby participates in the suppression of interferon induction. In Allpahuayo mammarenavirus (isolate Rat/Peru/CLHP-2472/1997) (ALLV), this protein is Nucleoprotein.